Reading from the N-terminus, the 182-residue chain is ATP synthase subunit delta (182 aa).

Belongs to the ATPase delta chain family. As to quaternary structure, F-type ATPases have 2 components, F(1) - the catalytic core - and F(0) - the membrane proton channel. F(1) has five subunits: alpha(3), beta(3), gamma(1), delta(1), epsilon(1). F(0) has three main subunits: a(1), b(2) and c(10-14). The alpha and beta chains form an alternating ring which encloses part of the gamma chain. F(1) is attached to F(0) by a central stalk formed by the gamma and epsilon chains, while a peripheral stalk is formed by the delta and b chains.

Its subcellular location is the cell inner membrane. Functionally, f(1)F(0) ATP synthase produces ATP from ADP in the presence of a proton or sodium gradient. F-type ATPases consist of two structural domains, F(1) containing the extramembraneous catalytic core and F(0) containing the membrane proton channel, linked together by a central stalk and a peripheral stalk. During catalysis, ATP synthesis in the catalytic domain of F(1) is coupled via a rotary mechanism of the central stalk subunits to proton translocation. In terms of biological role, this protein is part of the stalk that links CF(0) to CF(1). It either transmits conformational changes from CF(0) to CF(1) or is implicated in proton conduction. In Pseudothermotoga lettingae (strain ATCC BAA-301 / DSM 14385 / NBRC 107922 / TMO) (Thermotoga lettingae), this protein is ATP synthase subunit delta.